The chain runs to 185 residues: Large ribosomal subunit protein uL22 (185 aa).

This sequence belongs to the universal ribosomal protein uL22 family. In terms of assembly, part of the 50S ribosomal subunit.

In terms of biological role, this protein binds specifically to 23S rRNA. It makes multiple contacts with different domains of the 23S rRNA in the assembled 50S subunit and ribosome. Functionally, the globular domain of the protein is located near the polypeptide exit tunnel on the outside of the subunit, while an extended beta-hairpin is found that lines the wall of the exit tunnel in the center of the 70S ribosome. This is Large ribosomal subunit protein uL22 from Pyrobaculum neutrophilum (strain DSM 2338 / JCM 9278 / NBRC 100436 / V24Sta) (Thermoproteus neutrophilus).